The primary structure comprises 279 residues: NADPH-dependent 7-cyano-7-deazaguanine reductase (279 aa).

Position 86 to 88 (86 to 88) interacts with substrate; that stretch reads IES. An NADPH-binding site is contributed by 88-89; sequence SK. Residue C187 is the Thioimide intermediate of the active site. D194 acts as the Proton donor in catalysis. 226-227 contributes to the substrate binding site; it reads HE. 255–256 is an NADPH binding site; that stretch reads RG.

It belongs to the GTP cyclohydrolase I family. QueF type 2 subfamily. Homodimer.

The protein localises to the cytoplasm. The enzyme catalyses 7-aminomethyl-7-carbaguanine + 2 NADP(+) = 7-cyano-7-deazaguanine + 2 NADPH + 3 H(+). It participates in tRNA modification; tRNA-queuosine biosynthesis. Its function is as follows. Catalyzes the NADPH-dependent reduction of 7-cyano-7-deazaguanine (preQ0) to 7-aminomethyl-7-deazaguanine (preQ1). The sequence is that of NADPH-dependent 7-cyano-7-deazaguanine reductase from Actinobacillus pleuropneumoniae serotype 5b (strain L20).